The chain runs to 408 residues: tRNA-specific 2-thiouridylase MnmA (408 aa).

Residues 38-45 and methionine 64 contribute to the ATP site; that span reads GMSGGVDS. The interaction with target base in tRNA stretch occupies residues 124 to 126; that stretch reads NPD. Residue cysteine 129 is the Nucleophile of the active site. Cysteine 129 and cysteine 231 are disulfide-bonded. ATP is bound at residue glycine 153. Positions 181–183 are interaction with tRNA; that stretch reads KDQ. Catalysis depends on cysteine 231, which acts as the Cysteine persulfide intermediate. The tract at residues 348-349 is interaction with tRNA; sequence RY.

Belongs to the MnmA/TRMU family.

Its subcellular location is the cytoplasm. The enzyme catalyses S-sulfanyl-L-cysteinyl-[protein] + uridine(34) in tRNA + AH2 + ATP = 2-thiouridine(34) in tRNA + L-cysteinyl-[protein] + A + AMP + diphosphate + H(+). Its function is as follows. Catalyzes the 2-thiolation of uridine at the wobble position (U34) of tRNA, leading to the formation of s(2)U34. The protein is tRNA-specific 2-thiouridylase MnmA of Psychrobacter arcticus (strain DSM 17307 / VKM B-2377 / 273-4).